The primary structure comprises 159 residues: uncharacterized protein (159 aa).

The disordered stretch occupies residues 1 to 139; the sequence is MSRRAPGSRL…RKSQERSMSY (139 aa). Over residues 9 to 31 the composition is skewed to polar residues; that stretch reads RLSSGGTNYSRSWNDWQPRTDSA. The segment covering 65-82 has biased composition (basic and acidic residues); that stretch reads QRHDDTRVHADIQNDEKG. Residues 105–119 show a composition bias toward polar residues; it reads RVNNVTSPEFTSVQH. Over residues 125 to 134 the composition is skewed to basic and acidic residues; sequence ATKDMRKSQE.

This is an uncharacterized protein from Homo sapiens (Human).